The sequence spans 682 residues: Nisin leader peptide-processing serine protease NisP (682 aa).

The first 22 residues, 1-22 (MKKILGFLFIVCSLGLSATVHG), serve as a signal peptide directing secretion. Positions 23–195 (ETTNSQQLLS…RKAKEVVSLR (173 aa)) are excised as a propeptide. The 336-residue stretch at 231 to 566 (QWDMKYVTNN…VDLLNGKNKA (336 aa)) folds into the Peptidase S8 domain. Active-site charge relay system residues include Asp-259, His-306, and Ser-512. Positions 652–656 (LPVTG) match the LPXTG sorting signal motif. Thr-655 is modified (pentaglycyl murein peptidoglycan amidated threonine). Positions 656-682 (GDGEDFLPALGIVCISILGILKRKTKN) are cleaved as a propeptide — removed by sortase.

Belongs to the peptidase S8 family.

Its subcellular location is the secreted. The protein resides in the cell wall. It functions in the pathway antibiotic biosynthesis; nisin biosynthesis. Cleaves the lantibiotic nisin precursor peptide. The polypeptide is Nisin leader peptide-processing serine protease NisP (nisP) (Lactococcus lactis subsp. lactis (Streptococcus lactis)).